The following is a 445-amino-acid chain: rRNA methyltransferase 3B, mitochondrial (445 aa).

A mitochondrion-targeting transit peptide spans 1–37; the sequence is MATRIASMRFRCALFQSALTLGRNEVNIKRYVRRRRA. Disordered regions lie at residues 52 to 90 and 311 to 334; these read EGVISQTSERSSQHNNDITRNTDKSSIENPVSPNNSQPV and HSTTMGKHNDNTTPQKHRRPSDYG. 3 stretches are compositionally biased toward polar residues: residues 54 to 70, 78 to 90, and 311 to 324; these read VISQTSERSSQHNNDIT, IENPVSPNNSQPV, and HSTTMGKHNDNTTP. S-adenosyl-L-methionine is bound by residues glycine 387, isoleucine 411, and leucine 420.

This sequence belongs to the class IV-like SAM-binding methyltransferase superfamily. RNA methyltransferase TrmH family.

It localises to the mitochondrion. The enzyme catalyses a uridine in rRNA + S-adenosyl-L-methionine = a 2'-O-methyluridine in rRNA + S-adenosyl-L-homocysteine + H(+). In terms of biological role, S-adenosyl-L-methionine-dependent 2'-O-ribose methyltransferase that catalyzes the formation of 2'-O-methylguanosine at position 1485 (Gm1485) in the mitochondrial large subunit ribosomal RNA (mtLSU rRNA), a conserved modification in the peptidyl transferase domain of the mtLSU rRNA. Also required for formation of 2'-O-methyluridine at position 1484 (Um1484) mediated by MRM2. The polypeptide is rRNA methyltransferase 3B, mitochondrial (Danio rerio (Zebrafish)).